The sequence spans 274 residues: NH(3)-dependent NAD(+) synthetase (274 aa).

Residue 46–53 (GISGGQDS) coordinates ATP. Aspartate 52 contributes to the Mg(2+) binding site. Residue arginine 140 participates in deamido-NAD(+) binding. An ATP-binding site is contributed by threonine 160. Mg(2+) is bound at residue glutamate 165. 2 residues coordinate deamido-NAD(+): lysine 173 and aspartate 180. Residues lysine 189 and threonine 211 each coordinate ATP. 260-261 (HK) contacts deamido-NAD(+).

The protein belongs to the NAD synthetase family. As to quaternary structure, homodimer.

It catalyses the reaction deamido-NAD(+) + NH4(+) + ATP = AMP + diphosphate + NAD(+) + H(+). Its pathway is cofactor biosynthesis; NAD(+) biosynthesis; NAD(+) from deamido-NAD(+) (ammonia route): step 1/1. Catalyzes the ATP-dependent amidation of deamido-NAD to form NAD. Uses ammonia as a nitrogen source. The polypeptide is NH(3)-dependent NAD(+) synthetase (Streptococcus pneumoniae serotype 19F (strain G54)).